The primary structure comprises 426 residues: Neuromedin-U receptor 1 (426 aa).

The Extracellular portion of the chain corresponds to 1–65; sequence MTPLCLNCSV…QTELFMPICA (65 aa). 3 N-linked (GlcNAc...) asparagine glycosylation sites follow: N7, N27, and N41. A helical membrane pass occupies residues 66–86; that stretch reads TYLLIFVVGAVGNGLTCLVIL. Residues 87–97 are Cytoplasmic-facing; that stretch reads RHKAMRTPTNY. Residues 98–118 form a helical membrane-spanning segment; sequence YLFSLAVSDLLVLLVGLPLEL. Residues 119-138 lie on the Extracellular side of the membrane; it reads YEMWHNYPFLLGVGGCYFRT. C134 and C219 are oxidised to a cystine. The helical transmembrane segment at 139–161 threads the bilayer; sequence LLFEMVCLASVLNVTALSVERYV. Residues 162–181 lie on the Cytoplasmic side of the membrane; sequence AVVHPLQARSMVTRAHVRRV. Residues 182–202 traverse the membrane as a helical segment; it reads LGAVWGLAMLCSLPNTSLHGI. Topologically, residues 203-235 are extracellular; that stretch reads RQLHVPCRGPVPDSAVCMLVRPRALYNMVVQTT. A helical membrane pass occupies residues 236–256; the sequence is ALLFFCLPMAIMSVLYLLIGL. The Cytoplasmic portion of the chain corresponds to 257–294; sequence RLRRERLLLMQEAKGRGSAAARSRYTCRLQQHDRGRRQ. The chain crosses the membrane as a helical span at residues 295-315; the sequence is VTKMLFVLVVVFGICWAPFHA. At 316–338 the chain is on the extracellular side; sequence DRVMWSVVSQWTDGLHLAFQHVH. A helical membrane pass occupies residues 339–359; sequence VISGIFFYLGSAANPVLYSLM. Over 360–426 the chain is Cytoplasmic; it reads SSRFRETFQE…PEAQQETDPS (67 aa).

Belongs to the G-protein coupled receptor 1 family. Expressed in greatest abundance in peripheral organs, particularly in elements of the gastrointestinal and urogenital systems with highest levels in testes. In central nervous system structures express levels are much lower than those seen in peripheral organs. Within the CNS, has been detected in highest abundance in the cerebellum, dorsal root ganglia, hippocampus, and spinal cord.

The protein localises to the cell membrane. In terms of biological role, receptor for the neuromedin-U and neuromedin-S neuropeptides. The sequence is that of Neuromedin-U receptor 1 (NMUR1) from Homo sapiens (Human).